The chain runs to 340 residues: Protein B17 (340 aa).

This sequence belongs to the orthopoxvirus B17 protein family.

This is Protein B17 from Vaccinia virus (strain Copenhagen) (VACV).